A 178-amino-acid polypeptide reads, in one-letter code: N-alpha-acetyltransferase 20 (178 aa).

Residues 2–157 (TTLRAFTCDD…DAYDMRKALS (156 aa)) form the N-acetyltransferase domain.

It belongs to the acetyltransferase family. ARD1 subfamily. In terms of assembly, component of the N-terminal acetyltransferase B (NatB) complex which is composed of NAA20 and NAA25.

Its subcellular location is the cytoplasm. The protein resides in the nucleus. It catalyses the reaction N-terminal L-methionyl-L-asparaginyl-[protein] + acetyl-CoA = N-terminal N(alpha)-acetyl-L-methionyl-L-asparaginyl-[protein] + CoA + H(+). The catalysed reaction is N-terminal L-methionyl-L-glutaminyl-[protein] + acetyl-CoA = N-terminal N(alpha)-acetyl-L-methionyl-L-glutaminyl-[protein] + CoA + H(+). The enzyme catalyses N-terminal L-methionyl-L-aspartyl-[protein] + acetyl-CoA = N-terminal N(alpha)-acetyl-L-methionyl-L-aspartyl-[protein] + CoA + H(+). It carries out the reaction N-terminal L-methionyl-L-glutamyl-[protein] + acetyl-CoA = N-terminal N(alpha)-acetyl-L-methionyl-L-glutamyl-[protein] + CoA + H(+). Functionally, catalytic subunit of the NatB complex which catalyzes acetylation of the N-terminal methionine residues of peptides beginning with Met-Asp, Met-Glu, Met-Asn and Met-Gln. Proteins with cell cycle functions are overrepresented in the pool of NatB substrates. Required for maintaining the structure and function of actomyosin fibers and for proper cellular migration. The polypeptide is N-alpha-acetyltransferase 20 (NAA20) (Homo sapiens (Human)).